Consider the following 114-residue polypeptide: Small ribosomal subunit protein uS17 (114 aa).

The protein belongs to the universal ribosomal protein uS17 family. Part of the 30S ribosomal subunit.

Functionally, one of the primary rRNA binding proteins, it binds specifically to the 5'-end of 16S ribosomal RNA. The polypeptide is Small ribosomal subunit protein uS17 (Saccharolobus solfataricus (strain ATCC 35092 / DSM 1617 / JCM 11322 / P2) (Sulfolobus solfataricus)).